We begin with the raw amino-acid sequence, 430 residues long: Tyrosine--tRNA ligase (430 aa).

Tyr36 contacts L-tyrosine. Residues 41 to 50 (PTASSLHVGS) carry the 'HIGH' region motif. Residues Tyr170 and Gln174 each coordinate L-tyrosine. Positions 230 to 234 (KMGKT) match the 'KMSKS' region motif. Lys233 is a binding site for ATP. The 66-residue stretch at 362-427 (VPAFELFDEI…GKKNYHRLVL (66 aa)) folds into the S4 RNA-binding domain.

Belongs to the class-I aminoacyl-tRNA synthetase family. TyrS type 1 subfamily. As to quaternary structure, homodimer.

The protein resides in the cytoplasm. It carries out the reaction tRNA(Tyr) + L-tyrosine + ATP = L-tyrosyl-tRNA(Tyr) + AMP + diphosphate + H(+). Catalyzes the attachment of tyrosine to tRNA(Tyr) in a two-step reaction: tyrosine is first activated by ATP to form Tyr-AMP and then transferred to the acceptor end of tRNA(Tyr). This chain is Tyrosine--tRNA ligase, found in Desulfatibacillum aliphaticivorans.